The sequence spans 369 residues: Protein phosphatase 1 regulatory inhibitor subunit PPP1R8 homolog (369 aa).

A compositionally biased stretch (basic and acidic residues) spans 1-11 (MYGRSGLDRFK). Residues 1-26 (MYGRSGLDRFKKSQTSEPFSVSANPP) are disordered. A compositionally biased stretch (polar residues) spans 13–23 (SQTSEPFSVSA). One can recognise an FHA domain in the interval 87-138 (HIFGRQHQTCDFVLDHQSVSRQHAAVVPHKNGSIFVIDLGSAHGTFVANERL). The tract at residues 345–369 (VSQPAAETECGGVGEEDDNDDLFGD) is disordered. A compositionally biased stretch (acidic residues) spans 358–369 (GEEDDNDDLFGD).

Interacts with human protein phosphatase PPP1C.

Functionally, inhibitor of protein-phosphatase 1 (PP1). Binds to and inhibits PP1 activity. This Arabidopsis thaliana (Mouse-ear cress) protein is Protein phosphatase 1 regulatory inhibitor subunit PPP1R8 homolog.